The following is a 61-amino-acid chain: Small ribosomal subunit protein uS14 (61 aa).

Zn(2+)-binding residues include cysteine 24, cysteine 27, cysteine 40, and cysteine 43.

Belongs to the universal ribosomal protein uS14 family. Zinc-binding uS14 subfamily. Part of the 30S ribosomal subunit. Contacts proteins S3 and S10. Zn(2+) serves as cofactor.

Its function is as follows. Binds 16S rRNA, required for the assembly of 30S particles and may also be responsible for determining the conformation of the 16S rRNA at the A site. This chain is Small ribosomal subunit protein uS14, found in Spiroplasma citri.